An 89-amino-acid polypeptide reads, in one-letter code: UPF0297 protein SUB1776 (89 aa).

Belongs to the UPF0297 family.

The sequence is that of UPF0297 protein SUB1776 from Streptococcus uberis (strain ATCC BAA-854 / 0140J).